The primary structure comprises 322 residues: Cytochrome f (322 aa).

Residues 1-35 (MQNRNIFSWVKEQTTRSISVSIMILIYVITWTSIS) form the signal peptide. Tyrosine 38, cysteine 58, cysteine 61, and histidine 62 together coordinate heme. Residues 288-308 (VQGLFFFFASVILAQIFLVLK) traverse the membrane as a helical segment.

The protein belongs to the cytochrome f family. In terms of assembly, the 4 large subunits of the cytochrome b6-f complex are cytochrome b6, subunit IV (17 kDa polypeptide, petD), cytochrome f and the Rieske protein, while the 4 small subunits are PetG, PetL, PetM and PetN. The complex functions as a dimer. Heme is required as a cofactor.

The protein localises to the plastid. Its subcellular location is the chloroplast thylakoid membrane. Functionally, component of the cytochrome b6-f complex, which mediates electron transfer between photosystem II (PSII) and photosystem I (PSI), cyclic electron flow around PSI, and state transitions. This is Cytochrome f from Nandina domestica (Heavenly bamboo).